Reading from the N-terminus, the 875-residue chain is cGMP-specific 3',5'-cyclic phosphodiesterase (875 aa).

Disordered stretches follow at residues 1-29 (MERAGPSFGQQRQQQQPQQQKQQQRDQDS) and 78-102 (SCSCPLQQSPRADNSAPGTPTRKIS). Positions 10–22 (QQRQQQQPQQQKQ) are enriched in low complexity. The segment covering 78–101 (SCSCPLQQSPRADNSAPGTPTRKI) has biased composition (polar residues). The residue at position 102 (Ser-102) is a Phosphoserine. GAF domains are found at residues 164–314 (DVTA…GIVL) and 346–503 (SLEV…GLGI). The 325-residue stretch at 536–860 (ETRELQSLAA…QKWQALAEQQ (325 aa)) folds into the PDEase domain. His-613 (proton donor) is an active-site residue. Residues His-617, His-653, Asp-654, and Asp-764 each coordinate Zn(2+). A Mg(2+)-binding site is contributed by Asp-654. Gln-817 lines the 3',5'-cyclic GMP pocket.

It belongs to the cyclic nucleotide phosphodiesterase family. It depends on Zn(2+) as a cofactor. Mg(2+) serves as cofactor. Phosphorylation is regulated by binding of cGMP to the two allosteric sites. Phosphorylation by PRKG1 leads to its activation. As to expression, expressed in aortic smooth muscle cells, heart, placenta, skeletal muscle and pancreas and, to a much lesser extent, in brain, liver and lung.

The catalysed reaction is 3',5'-cyclic GMP + H2O = GMP + H(+). The protein operates within purine metabolism; 3',5'-cyclic GMP degradation; GMP from 3',5'-cyclic GMP: step 1/1. Sildenafil (Viagra) is a highly selective and potent inhibitor of PDE5A and is effective in the treatment of penile erectile dysfunction. Also inhibited by zaprinast. Plays a role in signal transduction by regulating the intracellular concentration of cyclic nucleotides. This phosphodiesterase catalyzes the specific hydrolysis of cGMP to 5'-GMP. Specifically regulates nitric-oxide-generated cGMP. The protein is cGMP-specific 3',5'-cyclic phosphodiesterase of Homo sapiens (Human).